Reading from the N-terminus, the 42-residue chain is Tachystatin-B1 (42 aa).

3 disulfide bridges follow: C4–C20, C11–C25, and C19–C37.

Granular hemocytes, small secretory granules.

Its subcellular location is the secreted. Functionally, exhibits stronger antimicrobial activity against the Gram-positive bacteria (S.aureus (IC(50) is 7.4 ug/ml)) and fungi (C.albicans (IC(50) is 3.0 ug/ml) and P.pastoris (IC(50) is 0.1 ug/ml)) than Gram-negative bacteria (E.coli no inhibition at 100 ug/ml). Binds to chitin (4.3 uM are required to obtain 50% of binding). Does not cause hemolysis on sheep erythrocytes. Has no blocking activity on the P-type calcium channel. In Tachypleus tridentatus (Japanese horseshoe crab), this protein is Tachystatin-B1.